The following is a 695-amino-acid chain: DNA ligase (695 aa).

NAD(+) is bound by residues 44–48 (DAEYD), 93–94 (SL), and Glu-124. Lys-126 (N6-AMP-lysine intermediate) is an active-site residue. Positions 147, 187, 304, and 328 each coordinate NAD(+). Zn(2+) is bound by residues Cys-422, Cys-425, Cys-440, and Cys-445. One can recognise a BRCT domain in the interval 606–695 (TVQGPLAGKT…GIEVEAAARS (90 aa)).

Belongs to the NAD-dependent DNA ligase family. LigA subfamily. The cofactor is Mg(2+). Mn(2+) serves as cofactor.

The catalysed reaction is NAD(+) + (deoxyribonucleotide)n-3'-hydroxyl + 5'-phospho-(deoxyribonucleotide)m = (deoxyribonucleotide)n+m + AMP + beta-nicotinamide D-nucleotide.. In terms of biological role, DNA ligase that catalyzes the formation of phosphodiester linkages between 5'-phosphoryl and 3'-hydroxyl groups in double-stranded DNA using NAD as a coenzyme and as the energy source for the reaction. It is essential for DNA replication and repair of damaged DNA. The sequence is that of DNA ligase from Thermomicrobium roseum (strain ATCC 27502 / DSM 5159 / P-2).